Reading from the N-terminus, the 491-residue chain is 3-octaprenyl-4-hydroxybenzoate carboxy-lyase (491 aa).

Residue N172 participates in Mn(2+) binding. Residues 175-177 (IYR), 189-191 (RWL), and 194-195 (RG) each bind prenylated FMN. E238 contributes to the Mn(2+) binding site. D287 (proton donor) is an active-site residue.

It belongs to the UbiD family. As to quaternary structure, homohexamer. Prenylated FMN is required as a cofactor. It depends on Mn(2+) as a cofactor.

It is found in the cell membrane. It catalyses the reaction a 4-hydroxy-3-(all-trans-polyprenyl)benzoate + H(+) = a 2-(all-trans-polyprenyl)phenol + CO2. It functions in the pathway cofactor biosynthesis; ubiquinone biosynthesis. In terms of biological role, catalyzes the decarboxylation of 3-octaprenyl-4-hydroxy benzoate to 2-octaprenylphenol, an intermediate step in ubiquinone biosynthesis. The polypeptide is 3-octaprenyl-4-hydroxybenzoate carboxy-lyase (Histophilus somni (strain 129Pt) (Haemophilus somnus)).